Reading from the N-terminus, the 382-residue chain is Queuine tRNA-ribosyltransferase (382 aa).

Aspartate 93 serves as the catalytic Proton acceptor. Substrate contacts are provided by residues 93 to 97 (DSGGF), aspartate 147, glutamine 191, and glycine 218. Residues 249–255 (GVGKPED) form an RNA binding region. The active-site Nucleophile is the aspartate 268. The interval 273-277 (TRNAR) is RNA binding; important for wobble base 34 recognition. Zn(2+) is bound by residues cysteine 306, cysteine 308, cysteine 311, and histidine 337.

Belongs to the queuine tRNA-ribosyltransferase family. Homodimer. Within each dimer, one monomer is responsible for RNA recognition and catalysis, while the other monomer binds to the replacement base PreQ1. The cofactor is Zn(2+).

The catalysed reaction is 7-aminomethyl-7-carbaguanine + guanosine(34) in tRNA = 7-aminomethyl-7-carbaguanosine(34) in tRNA + guanine. It functions in the pathway tRNA modification; tRNA-queuosine biosynthesis. Catalyzes the base-exchange of a guanine (G) residue with the queuine precursor 7-aminomethyl-7-deazaguanine (PreQ1) at position 34 (anticodon wobble position) in tRNAs with GU(N) anticodons (tRNA-Asp, -Asn, -His and -Tyr). Catalysis occurs through a double-displacement mechanism. The nucleophile active site attacks the C1' of nucleotide 34 to detach the guanine base from the RNA, forming a covalent enzyme-RNA intermediate. The proton acceptor active site deprotonates the incoming PreQ1, allowing a nucleophilic attack on the C1' of the ribose to form the product. After dissociation, two additional enzymatic reactions on the tRNA convert PreQ1 to queuine (Q), resulting in the hypermodified nucleoside queuosine (7-(((4,5-cis-dihydroxy-2-cyclopenten-1-yl)amino)methyl)-7-deazaguanosine). This chain is Queuine tRNA-ribosyltransferase, found in Haemophilus influenzae (strain 86-028NP).